We begin with the raw amino-acid sequence, 522 residues long: Amphoterin-induced protein 2 (522 aa).

A signal peptide spans 1-39; the sequence is MSLRVHTLPTLLGAVVRPGCRELLCLLMITVTVGPGASG. In terms of domain architecture, LRRNT spans 40–68; that stretch reads VCPTACICATDIVSCTNKNLSKVPGNLFR. Over 40–398 the chain is Extracellular; sequence VCPTACICAT…RSHAHEAFNT (359 aa). 2 cysteine pairs are disulfide-bonded: Cys-41-Cys-47 and Cys-45-Cys-54. A glycan (N-linked (GlcNAc...) asparagine) is linked at Asn-58. 6 LRR repeats span residues 69–90, 94–115, 118–139, 142–163, 166–187, and 193–214; these read LIKRLDLSYNRIGLLDSEWIPV, KLNTLILRHNNITSISTGSFST, NLKCLDLSSNKLKTVKNAVFQE, VLEVLLLYNNHISYLDPSAFGG, QLQKLYLSGNFLTQFPMDLYVG, and ELMFLDVSYNRIPSMPMHHINL. N-linked (GlcNAc...) asparagine glycosylation is present at Asn-104. One can recognise an LRRCT domain in the interval 228 to 284; the sequence is NPFVCDCSLYSLLVFWYRRHFSSVMDFKNDYTCRLWSDSRHSRQVLLLQDSFMNCSD. Cystine bridges form between Cys-232–Cys-260 and Cys-234–Cys-282. N-linked (GlcNAc...) asparagine glycans are attached at residues Asn-281, Asn-288, Asn-345, Asn-373, Asn-381, and Asn-384. Residues 289–379 enclose the Ig-like C2-type domain; that stretch reads GSFRALGFIH…RLLNETVDVT (91 aa). Cysteines 310 and 363 form a disulfide. The helical transmembrane segment at 399–419 threads the bilayer; it reads AFTTLAACVASIVLVLLYLYL. Residues 420-522 lie on the Cytoplasmic side of the membrane; that stretch reads TPCPCKCKTK…FSDTPFVAST (103 aa). The segment at 501–522 is disordered; sequence RGKSDSDSVNSVFSDTPFVAST.

It belongs to the immunoglobulin superfamily. AMIGO family. In terms of assembly, binds itself as well as AMIGO1 and AMIGO3. In terms of tissue distribution, highest levels in breast, ovary, cervix, and uterus. Lower levels in lung, colon, and rectum. Differentially expressed in 56% of thyroid, 57% of pancreatic and 45% of stomach cancers.

It localises to the cell membrane. The protein localises to the nucleus. Required for depolarization-dependent survival of cultured cerebellar granule neurons. May mediate homophilic as well as heterophilic cell-cell interaction with AMIGO1 or AMIGO3. May contribute to signal transduction through its intracellular domain. May be required for tumorigenesis of a subset of gastric adenocarcinomas. The chain is Amphoterin-induced protein 2 from Homo sapiens (Human).